The sequence spans 165 residues: Chorismate pyruvate-lyase (165 aa).

Residues arginine 77, leucine 115, and glutamate 156 each contribute to the substrate site.

Belongs to the UbiC family. Monomer.

The protein localises to the cytoplasm. It catalyses the reaction chorismate = 4-hydroxybenzoate + pyruvate. It functions in the pathway cofactor biosynthesis; ubiquinone biosynthesis. Functionally, removes the pyruvyl group from chorismate, with concomitant aromatization of the ring, to provide 4-hydroxybenzoate (4HB) for the ubiquinone pathway. The protein is Chorismate pyruvate-lyase of Salmonella typhi.